The sequence spans 676 residues: PAS domain-containing protein cky-1 (676 aa).

The segment covering 45–72 has biased composition (low complexity); that stretch reads SALNNNSINVPNNNTMGMSSAGSSNGSN. The tract at residues 45 to 89 is disordered; sequence SALNNNSINVPNNNTMGMSSAGSSNGSNLVNGQQRSTRGASKQRR. Residues 73 to 84 are compositionally biased toward polar residues; it reads LVNGQQRSTRGA. The interval 76–89 is basic motif; the sequence is GQQRSTRGASKQRR. In terms of domain architecture, bHLH spans 76 to 129; that stretch reads GQQRSTRGASKQRRDQINVEIQKLRDLLPLSDLIKDRLFQLQVMSLGCIFIRKH. The segment at 90 to 129 is helix-loop-helix motif; that stretch reads DQINVEIQKLRDLLPLSDLIKDRLFQLQVMSLGCIFIRKH. The region spanning 165–215 is the PAS domain; sequence MLMVTRSGKILHVSDNASEYLGHSVEEIMCQGDSIYDLVDGRDHGAVQAEL. The segment at 436–462 is disordered; sequence FSCQDSPPPSEEQQPSSPQTPPFTEQP.

Heterodimer; efficient DNA binding requires dimerization with another bHLH protein. Forms a heterodimer with ARNT homolog aha-1; binds DNA as heterodimer.

The protein resides in the nucleus. In terms of biological role, transcription factor. Efficient DNA binding requires dimerization with another bHLH protein, such as ARNT homolog aha-1. Regulates transcription of target genes, probably acting in complex with aha-1. This Caenorhabditis elegans protein is PAS domain-containing protein cky-1.